Here is a 424-residue protein sequence, read N- to C-terminus: UPF0597 protein Shewmr7_2876 (424 aa).

The protein belongs to the UPF0597 family.

The chain is UPF0597 protein Shewmr7_2876 from Shewanella sp. (strain MR-7).